The primary structure comprises 194 residues: UPF0301 protein BQ03640 (194 aa).

This sequence belongs to the UPF0301 (AlgH) family.

The polypeptide is UPF0301 protein BQ03640 (Bartonella quintana (strain Toulouse) (Rochalimaea quintana)).